Here is a 216-residue protein sequence, read N- to C-terminus: ATP synthase subunit 5, mitochondrial (216 aa).

The protein belongs to the ATPase delta chain family. As to quaternary structure, F-type ATPases have 2 components, CF(1) - the catalytic core - and CF(0) - the membrane proton channel. CF(1) has five subunits: alpha(3), beta(3), gamma(1), delta(1), epsilon(1). CF(0) has three main subunits: a, b and c.

The protein resides in the mitochondrion. Its subcellular location is the mitochondrion inner membrane. Functionally, mitochondrial membrane ATP synthase (F(1)F(0) ATP synthase or Complex V) produces ATP from ADP in the presence of a proton gradient across the membrane which is generated by electron transport complexes of the respiratory chain. F-type ATPases consist of two structural domains, F(1) - containing the extramembraneous catalytic core and F(0) - containing the membrane proton channel, linked together by a central stalk and a peripheral stalk. During catalysis, ATP synthesis in the catalytic domain of F(1) is coupled via a rotary mechanism of the central stalk subunits to proton translocation. Part of the complex F(0) domain and the peripheric stalk, which acts as a stator to hold the catalytic alpha(3)beta(3) subcomplex and subunit a/ATP6 static relative to the rotary elements. The polypeptide is ATP synthase subunit 5, mitochondrial (atp5) (Schizosaccharomyces pombe (strain 972 / ATCC 24843) (Fission yeast)).